Consider the following 374-residue polypeptide: Resuscitation-promoting factor Rpf2 (374 aa).

The signal sequence occupies residues 1 to 40 (MAPHQKSRINRINSTRSVPLRLATGGVLATLLIGGVTAAA). Residues 210-290 (IDRVDNTEIT…PATISRGTKT (81 aa)) form the G5 domain. A disordered region spans residues 228-252 (PTYVDDPEAPAGDETVVEEGAPGTK).

The protein belongs to the transglycosylase family. Rpf subfamily. Glycosylated; by Pmt, by at least mannose and galactose. Other unidentified sugars may also be present. Post-translationally, may be subject to proteolytic cleavage as multiple shorter forms are detected in gels. In terms of processing, at least 3 non-glycosylated protein isoforms of 35, 40 and 42 kDa are seen in gels.

It localises to the secreted. The protein resides in the cell surface. Its function is as follows. Factor that stimulates resuscitation of dormant cells. Has peptidoglycan (PG) hydrolytic activity. Active in the pM concentration range. Has little to no effect on actively-growing cells. PG fragments could either directly activate the resuscitation pathway of dormant bacteria or serve as a substrate for endogenous Rpf, resulting in low molecular weight products with resuscitation activity. The protein is Resuscitation-promoting factor Rpf2 (rpf2) of Corynebacterium glutamicum (strain ATCC 13032 / DSM 20300 / JCM 1318 / BCRC 11384 / CCUG 27702 / LMG 3730 / NBRC 12168 / NCIMB 10025 / NRRL B-2784 / 534).